A 502-amino-acid polypeptide reads, in one-letter code: Phenylacetaldehyde dehydrogenase (502 aa).

251 to 256 (GSTEVG) contributes to the NAD(+) binding site. Residues Glu-273 and Cys-307 contribute to the active site.

The protein belongs to the aldehyde dehydrogenase family.

It catalyses the reaction 2-phenylacetaldehyde + NAD(+) + H2O = 2-phenylacetate + NADH + 2 H(+). It participates in aromatic compound metabolism. Its function is as follows. Phenylacetaldehyde dehydrogenase that catalyzes the last step in the aerobic styrene degradation pathway by mediating oxidation of phenylacetaldehyde to phenylacetic acid. This Pseudomonas fluorescens protein is Phenylacetaldehyde dehydrogenase (styD).